The chain runs to 457 residues: MDYTASCLIFLFIAAGTVFGTDHETRLIGDLFANYNKVVRPVETYKDQVVVTVGLQLIQLINVDEVNQIVSTNIRLKQQWRDVNLKWDPAKYGGVKKIRIPSSDVWSPDLVLYNNADGDFAISKDTKILLEYTGKITWTPPAIFKSYCEIIVTYFPFDQQNCSMKFGTWTYDGSLLVINPERDRPDLSNFMASGEWMMKDYRCWKHWVYYTCCPDKPYLDITYHFVLQRLPLYFIVNVIIPCLLFSFLTGLVFYLPTDSGEKMTLSISVLLSLTVFLLVIVELIPSTSSAVPLIGKYMLFTMVFVIASIIITVIVINTHHRSPSTHTMPPWVRKIFIETIPNIMFFSTMKRPSQEKQPQKTFAEEMDISHISGKLGPAAVTYQSPALKNPDVKSAIEGIKYIAETMKSDQESNKASEEWKFVAMVLDHILLAVFMTVCVIGTLAVFAGRIIEMNMQE.

Positions 1–20 are cleaved as a signal peptide; that stretch reads MDYTASCLIFLFIAAGTVFG. Topologically, residues 21–230 are extracellular; it reads TDHETRLIGD…ITYHFVLQRL (210 aa). 2 cysteine pairs are disulfide-bonded: C148-C162 and C212-C213. A glycan (N-linked (GlcNAc...) asparagine) is linked at N161. 3 helical membrane-spanning segments follow: residues 231-255, 263-281, and 297-316; these read PLYF…VFYL, MTLS…LVIV, and YMLF…VIVI. Residues 317–428 are Cytoplasmic-facing; that stretch reads NTHHRSPSTH…WKFVAMVLDH (112 aa). The chain crosses the membrane as a helical span at residues 429–447; the sequence is ILLAVFMTVCVIGTLAVFA.

The protein belongs to the ligand-gated ion channel (TC 1.A.9) family. Acetylcholine receptor (TC 1.A.9.1) subfamily. Alpha-1/CHRNA1 sub-subfamily. One of the alpha chains that assemble within the acetylcholine receptor, a pentamer of two alpha chains, a beta, a delta, and a gamma or epsilon chains.

The protein localises to the postsynaptic cell membrane. It localises to the cell membrane. The catalysed reaction is K(+)(in) = K(+)(out). The enzyme catalyses Na(+)(in) = Na(+)(out). Its function is as follows. Upon acetylcholine binding, the AChR responds by an extensive change in conformation that affects all subunits and leads to opening of an ion-conducting channel across the plasma membrane. This is Acetylcholine receptor subunit alpha-1-B (chrna1-b) from Xenopus laevis (African clawed frog).